Reading from the N-terminus, the 316-residue chain is Transcription initiation factor IIB (316 aa).

The segment at 11 to 42 (PRVTCPNHPDAILVEDYRAGDMICPECGLVVG) adopts a TFIIB-type zinc-finger fold. Zn(2+) contacts are provided by Cys15, His18, Cys34, and Cys37. Residues Ser70, Ser76, and Ser92 each carry the phosphoserine modification. A run of 2 repeats spans residues 124–200 (MADR…LILK) and 218–294 (FCSN…LIYP). 4 residues coordinate DNA: Lys152, Arg154, Lys189, and Lys196. The tract at residues 189-193 (KEIGR) is core promoter DNA-binding. At Lys238 the chain carries N6-acetyllysine; by autocatalysis. Residues 244–316 (LVPGRSPISV…DTPVDKLPQL (73 aa)) form a necessary for TATA box-bound TBP complex formation region. Arg248 provides a ligand contact to DNA. The tract at residues 249–252 (SPIS) is core promoter DNA-binding. Residues Lys272, Ala281, Thr284, Arg286, and Arg290 each coordinate DNA. The tract at residues 283-286 (VTIR) is core promoter DNA-binding.

This sequence belongs to the TFIIB family. In terms of assembly, found in a ternary complex with TATA box-bound TBP. Part of a TFIID-containing RNA polymerase II pre-initiation complex (PIC) that is composed of TBP and at least GTF2A1, GTF2A2, GTF2E1, GTF2E2, GTF2F1, GTF2H2, GTF2H3, GTF2H4, GTF2H5, GTF2B, TCEA1, ERCC2, ERCC3, TAF1, TAF2, TAF3, TAF4, TAF5, TAF6, TAF7, TAF8, TAF9, TAF10, TAF11, TAF12 and TAF13. Associates with TFIID-TFIIA (DA complex) to form TFIID-TFIIA-TFIIB (DAB complex), which is then recognized by RNA polymerase II (Pol II). Found in a RNA polymerase II initiation complex. Interacts (via C-terminus) with TBP; this interaction with TATA box-bound TBP guides Pol II into the PIC. Interacts (via N-terminus) with Pol II. Interacts (via C-terminus) with SSU72; this interaction is inhibited by SYMPK. Interacts with NR2F1; this interaction is direct. Interacts with PGR. Interacts with ESR1. Interacts with GTF2F1 (via C-terminus and preferentially via acetylated form); this interaction prevents binding of GTF2B to GTF2F2. Interacts with GTF2F2 (via N-terminus); this interaction is inhibited in presence of GTF2F1. Interacts with the transcription elongation factor TCEA2. Interacts with HSF1 (via transactivation domain). Interacts with GPBP1. Acetylated. Autoacetylated; autoacetylation at Lys-238 stimulates transcription activation.

Its subcellular location is the nucleus. The protein localises to the chromosome. It carries out the reaction L-lysyl-[protein] + acetyl-CoA = N(6)-acetyl-L-lysyl-[protein] + CoA + H(+). General transcription factor that plays a role in transcription initiation by RNA polymerase II (Pol II). Involved in the pre-initiation complex (PIC) formation and Pol II recruitment at promoter DNA. Together with the TATA box-bound TBP forms the core initiation complex and provides a bridge between TBP and the Pol II-TFIIF complex. Released from the PIC early following the onset of transcription during the initiation and elongation transition and reassociates with TBP during the next transcription cycle. Associates with chromatin to core promoter-specific regions. Binds to two distinct DNA core promoter consensus sequence elements in a TBP-independent manner; these IIB-recognition elements (BREs) are localized immediately upstream (BREu), 5'-[GC][GC][GA]CGCC-3', and downstream (BREd), 5'-[GA]T[TGA][TG][GT][TG][TG]-3', of the TATA box element. Modulates transcription start site selection. Also exhibits autoacetyltransferase activity that contributes to the activated transcription. This Mus musculus (Mouse) protein is Transcription initiation factor IIB.